The sequence spans 239 residues: Demethylmenaquinone methyltransferase (239 aa).

S-adenosyl-L-methionine-binding positions include Thr68, Asp86, and Asn111–Gly112.

This sequence belongs to the class I-like SAM-binding methyltransferase superfamily. MenG/UbiE family.

It carries out the reaction a 2-demethylmenaquinol + S-adenosyl-L-methionine = a menaquinol + S-adenosyl-L-homocysteine + H(+). Its pathway is quinol/quinone metabolism; menaquinone biosynthesis; menaquinol from 1,4-dihydroxy-2-naphthoate: step 2/2. Functionally, methyltransferase required for the conversion of demethylmenaquinol (DMKH2) to menaquinol (MKH2). This chain is Demethylmenaquinone methyltransferase, found in Tropheryma whipplei (strain TW08/27) (Whipple's bacillus).